A 64-amino-acid polypeptide reads, in one-letter code: Large ribosomal subunit protein bL35 (64 aa).

Positions 1–22 (MPKAKTHSGASKRFRRTGTGKI) are disordered.

It belongs to the bacterial ribosomal protein bL35 family.

This chain is Large ribosomal subunit protein bL35, found in Mycobacterium tuberculosis (strain ATCC 25177 / H37Ra).